The primary structure comprises 291 residues: Inhibitory synaptic factor 1 (291 aa).

Residues 1 to 25 (MNIRGAPDLGQPSDDPNSGGERERI) are disordered. The stretch at 30–63 (KMVIGQLEGILRELKEVAKELREVVSQIDKLTSD) forms a coiled coil. Disordered regions lie at residues 120–186 (TPSD…ERVR) and 201–291 (EEGD…KGKN). Positions 201-213 (EEGDGEEVEEEEA) are enriched in acidic residues. Residues 262–284 (RNSSTQTVSDKSTQTVLPYTATK) show a composition bias toward polar residues.

This sequence belongs to the INSYN1 family. As to quaternary structure, interacts with GPHN.

Its subcellular location is the postsynaptic density. Component of the protein machinery at the inhibitory synapses, probably acting as a scaffold. Inhibitory synapses dampen neuronal activity through postsynaptic hyperpolarization. This synaptic inhibition is fundamental for the functioning of the central nervous system, shaping and orchestrating the flow of information through neuronal networks to generate a precise neural code. The chain is Inhibitory synaptic factor 1 (Insyn1) from Rattus norvegicus (Rat).